The chain runs to 59 residues: Alpha-conotoxin CIA (59 aa).

Positions M1–S16 are cleaved as a signal peptide. A propeptide spanning residues F17–R42 is cleaved from the precursor. 2 cysteine pairs are disulfide-bonded: C46–C51 and C47–C57. The residue at position 57 (C57) is a Cysteine amide.

The protein belongs to the conotoxin A superfamily. As to expression, expressed by the venom duct.

It is found in the secreted. In terms of biological role, alpha-conotoxins act on postsynaptic membranes, they bind to the nicotinic acetylcholine receptors (nAChR) and thus inhibit them. This toxin blocks the rat muscle nAChRs alpha-1-beta-1-gamma-delta (CHRNA1-CHRNB1-CHRNG-CHRND) (IC(50)=5.7 nM) and the rat neuronal nAChR alpha-3-beta-2/CHRNA3-CHRNB2 (IC(50)=2060 nM). In vivo, intramuscular injection into zebrafish produces rapid flaccid paralysis. This Conus catus (Cat cone) protein is Alpha-conotoxin CIA.